The chain runs to 207 residues: Small ribosomal subunit protein uS4c (207 aa).

The disordered stretch occupies residues 20–52 (GFSKKIDRNHTPPGQHGWKKKASDQKKSKESQY). A compositionally biased stretch (basic and acidic residues) spans 40–52 (KASDQKKSKESQY). Residues 97 to 158 (MRLDNIIYRL…NSQQLIKNYL (62 aa)) enclose the S4 RNA-binding domain.

This sequence belongs to the universal ribosomal protein uS4 family. In terms of assembly, part of the 30S ribosomal subunit. Contacts protein S5. The interaction surface between S4 and S5 is involved in control of translational fidelity.

It is found in the plastid. One of the primary rRNA binding proteins, it binds directly to 16S rRNA where it nucleates assembly of the body of the 30S subunit. Functionally, with S5 and S12 plays an important role in translational accuracy. In Prototheca wickerhamii, this protein is Small ribosomal subunit protein uS4c (rps4).